A 347-amino-acid chain; its full sequence is Heat-inducible transcription repressor HrcA (347 aa).

Belongs to the HrcA family.

Negative regulator of class I heat shock genes (grpE-dnaK-dnaJ and groELS operons). Prevents heat-shock induction of these operons. This Sphingopyxis alaskensis (strain DSM 13593 / LMG 18877 / RB2256) (Sphingomonas alaskensis) protein is Heat-inducible transcription repressor HrcA.